The sequence spans 329 residues: L-threonine dehydratase catabolic TdcB (329 aa).

An AMP-binding site is contributed by 53-54; the sequence is RT. K58 is subject to N6-(pyridoxal phosphate)lysine. Residues Q88, 119–120, and N314 each bind AMP; that span reads DY.

This sequence belongs to the serine/threonine dehydratase family. In terms of assembly, in the native structure, TdcB is in a dimeric form, whereas in the TdcB-AMP complex, it exists in a tetrameric form (dimer of dimers). Pyridoxal 5'-phosphate serves as cofactor.

The enzyme catalyses L-threonine = 2-oxobutanoate + NH4(+). It catalyses the reaction L-serine = pyruvate + NH4(+). It participates in amino-acid degradation; L-threonine degradation via propanoate pathway; propanoate from L-threonine: step 1/4. Its activity is regulated as follows. Each protein molecule can bind up to four molecules of AMP, which act as an allosteric activator to the enzyme. In terms of biological role, catalyzes the anaerobic formation of alpha-ketobutyrate and ammonia from threonine in a two-step reaction. The first step involved a dehydration of threonine and a production of enamine intermediates (aminocrotonate), which tautomerizes to its imine form (iminobutyrate). Both intermediates are unstable and short-lived. The second step is the nonenzymatic hydrolysis of the enamine/imine intermediates to form 2-ketobutyrate and free ammonia. In the low water environment of the cell, the second step is accelerated by RidA. TdcB also dehydrates serine to yield pyruvate via analogous enamine/imine intermediates. This chain is L-threonine dehydratase catabolic TdcB (tdcB), found in Escherichia coli O157:H7.